Here is a 425-residue protein sequence, read N- to C-terminus: Kynurenine/alpha-aminoadipate aminotransferase, mitochondrial (425 aa).

The transit peptide at 1–29 (MNYSRFLTATSLARKPSPIRTTADILSKA) directs the protein to the mitochondrion. Residue R20 coordinates substrate. S40 bears the Phosphoserine mark. Residue K69 is modified to N6-acetyllysine. Residue Y74 participates in substrate binding. Position 172 is an N6-succinyllysine (K172). At K179 the chain carries N6-acetyllysine. N202 provides a ligand contact to substrate. K263 bears the N6-(pyridoxal phosphate)lysine; alternate mark. An N6-acetyllysine; alternate mark is found at K263 and K339. N6-succinyllysine; alternate is present on residues K263 and K339. K351 carries the post-translational modification N6-acetyllysine. K367 is modified (N6-acetyllysine; alternate). Residue K367 is modified to N6-succinyllysine; alternate. R399 serves as a coordination point for substrate. K422 bears the N6-acetyllysine mark.

It belongs to the class-I pyridoxal-phosphate-dependent aminotransferase family. In terms of assembly, homodimer. Pyridoxal 5'-phosphate is required as a cofactor. Expressed mainly in kidney and to a lesser amount in liver and brain.

It localises to the mitochondrion. The enzyme catalyses L-kynurenine + 2-oxoglutarate = kynurenate + L-glutamate + H2O. The catalysed reaction is L-2-aminoadipate + 2-oxoglutarate = 2-oxoadipate + L-glutamate. It catalyses the reaction glycine + 2-oxoglutarate = glyoxylate + L-glutamate. It carries out the reaction L-kynurenine + glyoxylate = kynurenate + glycine + H2O. The enzyme catalyses 3-hydroxy-L-kynurenine + glyoxylate = xanthurenate + glycine + H2O. The catalysed reaction is 2-oxohexanoate + L-kynurenine = L-2-aminohexanoate + kynurenate + H2O. It catalyses the reaction 3-phenylpyruvate + L-kynurenine = kynurenate + L-phenylalanine + H2O. It carries out the reaction 4-methylsulfanyl-2-oxobutanoate + L-kynurenine = kynurenate + L-methionine + H2O. The enzyme catalyses 2-oxo-3-sulfanylpropanoate + L-kynurenine = kynurenate + L-cysteine + H2O. The catalysed reaction is indole-3-pyruvate + L-kynurenine = kynurenate + L-tryptophan + H2O. It catalyses the reaction 2-oxopentanoate + L-kynurenine = L-2-aminopentanoate + kynurenate + H2O. It carries out the reaction 4-methyl-2-oxopentanoate + L-kynurenine = kynurenate + L-leucine + H2O. The enzyme catalyses glyoxylate + L-methionine = 4-methylsulfanyl-2-oxobutanoate + glycine. The catalysed reaction is L-2-aminoadipate + glyoxylate = 2-oxoadipate + glycine. It catalyses the reaction L-tyrosine + glyoxylate = 3-(4-hydroxyphenyl)pyruvate + glycine. It carries out the reaction glyoxylate + L-phenylalanine = 3-phenylpyruvate + glycine. The enzyme catalyses L-tryptophan + glyoxylate = indole-3-pyruvate + glycine. The catalysed reaction is L-leucine + glyoxylate = 4-methyl-2-oxopentanoate + glycine. It catalyses the reaction 2-oxobutanoate + L-kynurenine = (2S)-2-aminobutanoate + kynurenate + H2O. It carries out the reaction 2-oxoadipate + L-kynurenine = L-2-aminoadipate + kynurenate + H2O. Its pathway is amino-acid degradation; L-lysine degradation via saccharopine pathway; glutaryl-CoA from L-lysine: step 4/6. In terms of biological role, transaminase with broad substrate specificity. Has transaminase activity towards aminoadipate, kynurenine, methionine and glutamate. Shows activity also towards tryptophan, aspartate and hydroxykynurenine. Accepts a variety of oxo-acids as amino-group acceptors, with a preference for 2-oxoglutarate, 2-oxocaproic acid, phenylpyruvate and alpha-oxo-gamma-methiol butyric acid. Can also use glyoxylate as amino-group acceptor (in vitro). The chain is Kynurenine/alpha-aminoadipate aminotransferase, mitochondrial from Mus musculus (Mouse).